A 346-amino-acid chain; its full sequence is Thioredoxin domain-containing protein R362 (346 aa).

The Thioredoxin domain occupies 212–345 (LTNLSNTEAN…IVKFIDETMS (134 aa)).

Its subcellular location is the virion. This is Thioredoxin domain-containing protein R362 from Acanthamoeba polyphaga (Amoeba).